The chain runs to 60 residues: Mastoparan-VT6 (60 aa).

A signal peptide spans 1-27 (MKNTILILFTAFIALLGFFGMSAEALA). AXPX repeat units follow at residues 27 to 30 (ADPK), 31 to 34 (ADPL), 35 to 38 (AGPN), and 41 to 44 (ADPE). Residues 28–45 (DPKADPLAGPNPDADPEA) constitute a propeptide that is removed on maturation. The residue at position 59 (leucine 59) is a Leucine amide.

It belongs to the MCD family. Mastoparan subfamily. As to expression, expressed by the venom gland.

It is found in the secreted. The synthetic peptide shows antimicrobial activities against Gram-negative bacteria (but not against all strains tested), Gram-positive bacteria (all strains tested) and the fungi C.albicans and C.parapsilosis. Exhibits little hemolytic activity against washed human erythrocytes. The protein is Mastoparan-VT6 of Vespa tropica (Greater banded hornet).